We begin with the raw amino-acid sequence, 1464 residues long: DNA-directed RNA polymerase subunit beta' (1464 aa).

Mg(2+) is bound by residues Asp-541, Asp-543, and Asp-545. Positions 1022, 1098, 1105, and 1108 each coordinate Zn(2+). Residues 1435–1464 are disordered; sequence LEDEQQQIIEVDDSDISVEDEENDFYENED.

Belongs to the RNA polymerase beta' chain family. In terms of assembly, the RNAP catalytic core consists of 2 alpha, 1 beta, 1 beta' and 1 omega subunit. When a sigma factor is associated with the core the holoenzyme is formed, which can initiate transcription. The cofactor is Mg(2+). Requires Zn(2+) as cofactor.

The enzyme catalyses RNA(n) + a ribonucleoside 5'-triphosphate = RNA(n+1) + diphosphate. Its function is as follows. DNA-dependent RNA polymerase catalyzes the transcription of DNA into RNA using the four ribonucleoside triphosphates as substrates. This Metamycoplasma arthritidis (strain 158L3-1) (Mycoplasma arthritidis) protein is DNA-directed RNA polymerase subunit beta'.